We begin with the raw amino-acid sequence, 271 residues long: MKSTNISRSFSKIKKEKRIALMPFLMAGDPDLETTAKILLELQANGADMIELGIPYSDPLADGPIIQLAASRALSAGTSPDRVFKMLFELRDQLTIPIILFTYSNPLINKGLEEFCLQASKVGVSGLVVPDLPLEEAEKLSDIAESKEIDLVLLVAPTTPKDRMKRIAATSNGFTYLVSVTGVTGERSSLEDNVGSLVQQLKDSSSSPIAVGFGISDVKHIEQVREWGADGAIVGSALVKRIANASIEMKVEEAGSFCKELRAATNEYFFK.

Residues E51 and D62 each act as proton acceptor in the active site.

Belongs to the TrpA family. Tetramer of two alpha and two beta chains.

It catalyses the reaction (1S,2R)-1-C-(indol-3-yl)glycerol 3-phosphate + L-serine = D-glyceraldehyde 3-phosphate + L-tryptophan + H2O. Its pathway is amino-acid biosynthesis; L-tryptophan biosynthesis; L-tryptophan from chorismate: step 5/5. Its function is as follows. The alpha subunit is responsible for the aldol cleavage of indoleglycerol phosphate to indole and glyceraldehyde 3-phosphate. The sequence is that of Tryptophan synthase alpha chain from Prochlorococcus marinus (strain NATL2A).